The primary structure comprises 217 residues: Response regulator RR06 (217 aa).

Residues 2-115 (NILVADDEEM…LLVKRIKALI (114 aa)) enclose the Response regulatory domain. D51 is modified (4-aspartylphosphate). The segment at residues 122-217 (EDIWRYQDVT…VKNVGYKISL (96 aa)) is a DNA-binding region (ompR/PhoB-type).

In terms of processing, phosphorylated at threonine residues by StkP; threonine phosphorylation enhances RR06 binding to DNA and may also increase expression of CbpA. May be de-phosphorylated by PhpP.

Its function is as follows. Member of the two-component regulatory system HK06/RR06 involved in regulation of target genes, including choline-binding protein CbpA. Binds to the promoter region of CbpA and directly activates transcription. This is Response regulator RR06 from Streptococcus pneumoniae serotype 2 (strain D39 / NCTC 7466).